Consider the following 130-residue polypeptide: Large ribosomal subunit protein bL17 (130 aa).

Belongs to the bacterial ribosomal protein bL17 family. In terms of assembly, part of the 50S ribosomal subunit. Contacts protein L32.

The chain is Large ribosomal subunit protein bL17 from Shewanella pealeana (strain ATCC 700345 / ANG-SQ1).